Here is a 338-residue protein sequence, read N- to C-terminus: Sesquiterpene synthase 1 (338 aa).

Residues Asp93, Asn228, Ser232, and Glu236 each contribute to the Mg(2+) site. The short motif at 93 to 97 (DNISD) is the DDXXD motif element. The NSE/DTE motif motif lies at 228 to 236 (NDIFSYNVE). Residues Arg316 and Tyr317 each coordinate (2E,6E)-farnesyl diphosphate.

It belongs to the terpene synthase family. It depends on Mg(2+) as a cofactor.

It carries out the reaction (2E,6E)-farnesyl diphosphate = alpha-copaene + diphosphate. The enzyme catalyses (2E,6E)-farnesyl diphosphate = beta-copaene + diphosphate. It catalyses the reaction (2E,6E)-farnesyl diphosphate = alpha-muurolene + diphosphate. The catalysed reaction is (2E,6E)-farnesyl diphosphate = gamma-muurolene + diphosphate. It carries out the reaction (2E,6E)-farnesyl diphosphate = delta-cadinene + diphosphate. Its function is as follows. Terpene cyclase that catalyzes the cyclization of farnesyl diphosphate (FPP) to various sesquiterpenes, including alpha-copaene, beta-copaene, beta-elemene, alpha-muurolene, gamma-muurolene and delta-cadinene. In Postia placenta (strain ATCC 44394 / Madison 698-R) (Brown rot fungus), this protein is Sesquiterpene synthase 1.